The sequence spans 176 residues: Peptide deformylase (176 aa).

Positions 92 and 134 each coordinate Fe cation. The active site involves Glu135. His138 contacts Fe cation.

Belongs to the polypeptide deformylase family. Requires Fe(2+) as cofactor.

It carries out the reaction N-terminal N-formyl-L-methionyl-[peptide] + H2O = N-terminal L-methionyl-[peptide] + formate. In terms of biological role, removes the formyl group from the N-terminal Met of newly synthesized proteins. Requires at least a dipeptide for an efficient rate of reaction. N-terminal L-methionine is a prerequisite for activity but the enzyme has broad specificity at other positions. This chain is Peptide deformylase, found in Acinetobacter baumannii (strain SDF).